The chain runs to 226 residues: Chalcone--flavanone isomerase 2-A (226 aa).

The substrate site is built by Thr-49, Asn-114, and Ser-191.

This sequence belongs to the chalcone isomerase family. As to expression, mostly expressed in flowers, and, to a lower extent, in roots, shoots, and seeds.

It catalyses the reaction a chalcone = a flavanone.. The protein operates within secondary metabolite biosynthesis; flavonoid biosynthesis. In terms of biological role, catalyzes the intramolecular cyclization of bicyclic chalcones into tricyclic (S)-flavanones. Responsible for the isomerization of 4,2',4',6'-tetrahydroxychalcone (also termed chalcone) into naringenin. This is Chalcone--flavanone isomerase 2-A (CHI2-A) from Glycine max (Soybean).